Consider the following 109-residue polypeptide: Transcription initiation factor IIA subunit 2 (109 aa).

This sequence belongs to the TFIIA subunit 2 family. As to quaternary structure, TFIIA is a heterodimer of the large unprocessed subunit 1 and a small subunit gamma. It was originally believed to be a heterotrimer of an alpha (p35), a beta (p19) and a gamma subunit (p12). Interacts with NCOA6 general coactivator. TFIIA forms a complex with TBP. Interacts with HSF1 (via transactivation domain). Part of TBP-based Pol II pre-initiation complex (PIC), in which Pol II core assembles with general transcription factors and other specific initiation factors including GTF2E1, GTF2E2, GTF2F1, GTF2F2, TCEA1, ERCC2, ERCC3, GTF2H2, GTF2H3, GTF2H4, GTF2H5, GTF2A1, GTF2A2, GTF2B and TBP; this large multi-subunit PIC complex mediates DNA unwinding and targets Pol II core to the transcription start site where the first phosphodiester bond forms. In terms of assembly, (Microbial infection) Interacts with SV40 Large T antigen.

The protein localises to the nucleus. Its function is as follows. TFIIA is a component of the transcription machinery of RNA polymerase II and plays an important role in transcriptional activation. TFIIA in a complex with TBP mediates transcriptional activity. The polypeptide is Transcription initiation factor IIA subunit 2 (GTF2A2) (Homo sapiens (Human)).